A 702-amino-acid polypeptide reads, in one-letter code: Palmitoyltransferase AKR1 (702 aa).

Residues 1 to 40 (MSTDAELQTISGLSVASKSAPSTQTEGVTASGKVESTTNA) are compositionally biased toward polar residues. The disordered stretch occupies residues 1–51 (MSTDAELQTISGLSVASKSAPSTQTEGVTASGKVESTTNAEEATSDVEEEE). Over 1–299 (MSTDAELQTI…TTNLLCFFTP (299 aa)) the chain is Cytoplasmic. ANK repeat units lie at residues 49–80 (EEENPLVVAARDGNTAEVKRLCESGSYSVLDT), 83–112 (DGVTALHWAAVNNRISTCQYLVEQGAVVDA), 117–147 (LNGTPLHWACRRGLVYIVHYLIQNGADPLRS), 150–179 (QGYNALHLATHSSNVMLLVYLLHQGLPVDC), 183–212 (NGRTALHWAAYQGDALSVDVLLRWGSDVKI), and 216–245 (QGFLPLHWGIVNGSRNSLARLIEEGSDMYA). 2 helical membrane-spanning segments follow: residues 300–320 (FILILLGLVLCTFCGPIFGII) and 321–341 (LTVATLFGSIKLLKTLVLPSL). Topologically, residues 342–354 (YNGHAALLKSPFQ) are cytoplasmic. A helical membrane pass occupies residues 355-375 (AGIFTGSAFWVTVKYLTSVLP). Residues 376-379 (ATFA) lie on the Lumenal side of the membrane. Residues 380-400 (SHPILNFFFASIFGLAMYCFF) traverse the membrane as a helical segment. Residues 401–479 (RCMSMDPGYI…WNAIGVRNHR (79 aa)) are Cytoplasmic-facing. Residues 436–486 (HFCFVTYVRKPLRSKFCRQSKRVVARFDHFCPWVWNAIGVRNHRMFVLYVL) form the DHHC domain. Cys-466 functions as the S-palmitoyl cysteine intermediate in the catalytic mechanism. Residues 480–500 (MFVLYVLFLQIGIPLWLALNS) form a helical membrane-spanning segment. Topologically, residues 501-518 (AYFGELLEIKRWDPLEFY) are lumenal. A helical membrane pass occupies residues 519–539 (LVIWISLQLIWITFLSFVQIF). Topologically, residues 540–702 (QICRSLTTSE…GEALLAESQV (163 aa)) are cytoplasmic. The segment at 679–702 (PNQQQTNNRSTREDGEALLAESQV) is disordered.

The protein belongs to the DHHC palmitoyltransferase family. AKR/ZDHHC17 subfamily.

The protein localises to the early endosome membrane. Its subcellular location is the golgi apparatus membrane. The enzyme catalyses L-cysteinyl-[protein] + hexadecanoyl-CoA = S-hexadecanoyl-L-cysteinyl-[protein] + CoA. Functionally, palmitoyltransferase specific for casein kinase 1. The polypeptide is Palmitoyltransferase AKR1 (AKR1) (Yarrowia lipolytica (strain CLIB 122 / E 150) (Yeast)).